The following is a 465-amino-acid chain: Pancreatic triacylglycerol lipase (465 aa).

The first 16 residues, 1-16 (MLLVWSLALLLGAVAG), serve as a signal peptide directing secretion. 2 disulfide bridges follow: Cys-20/Cys-26 and Cys-107/Cys-118. Residue Ser-169 is the Nucleophile of the active site. The active-site Charge relay system is the Asp-193. Ca(2+) contacts are provided by Glu-204, Arg-207, Asp-209, and Asp-212. An intrachain disulfide couples Cys-254 to Cys-278. The active-site Charge relay system is His-280. 3 cysteine pairs are disulfide-bonded: Cys-302–Cys-313, Cys-316–Cys-321, and Cys-449–Cys-465. The PLAT domain maps to 355–465 (WRYKVSVTLS…EDVLLTLNAC (111 aa)).

The protein belongs to the AB hydrolase superfamily. Lipase family. Forms a 1:1 stoichiometric complex with (pro)colipase/CLPS. Expressed in many tissues with highest expression in liver. During hibernation there is a significant increases in expression in heart, white adipose tissue (WAT), and testis; but not in pancreas.

The protein localises to the secreted. The catalysed reaction is a triacylglycerol + H2O = a diacylglycerol + a fatty acid + H(+). The enzyme catalyses 1,2,3-tributanoylglycerol + H2O = dibutanoylglycerol + butanoate + H(+). It catalyses the reaction 1,2,3-tri-(9Z-octadecenoyl)-glycerol + H2O = di-(9Z)-octadecenoylglycerol + (9Z)-octadecenoate + H(+). It carries out the reaction all-trans-retinyl hexadecanoate + H2O = all-trans-retinol + hexadecanoate + H(+). The catalysed reaction is 1,2-di-(9Z-octadecenoyl)-glycerol + H2O = (9Z-octadecenoyl)-glycerol + (9Z)-octadecenoate + H(+). Its activity is regulated as follows. Inhibited by bile salts, is reactivated by (pro)colipase/CLPS. In terms of biological role, plays an important role in fat metabolism. It preferentially splits the esters of long-chain fatty acids at positions 1 and 3, producing mainly 2-monoacylglycerol and free fatty acids, and shows considerably higher activity against insoluble emulsified substrates than against soluble ones. Plays a role in hibernation as a key enzyme that shows high activity at low temperatures. When expressed in the hibernating heart it liberates fatty acids from triglycerides at temperatures as low as 0 degrees Celsius. In Ictidomys tridecemlineatus (Thirteen-lined ground squirrel), this protein is Pancreatic triacylglycerol lipase (PNLIP).